Reading from the N-terminus, the 118-residue chain is NADH-ubiquinone oxidoreductase chain 3 (118 aa).

Helical transmembrane passes span 7–27 and 87–107; these read ICIYLVISPLVSLIPLGLPFL and IDPFGSWSMMAFLLILTIGSL.

This sequence belongs to the complex I subunit 3 family.

It localises to the mitochondrion membrane. The enzyme catalyses a ubiquinone + NADH + 5 H(+)(in) = a ubiquinol + NAD(+) + 4 H(+)(out). Its function is as follows. Core subunit of the mitochondrial membrane respiratory chain NADH dehydrogenase (Complex I) that is believed to belong to the minimal assembly required for catalysis. Complex I functions in the transfer of electrons from NADH to the respiratory chain. The immediate electron acceptor for the enzyme is believed to be ubiquinone. The polypeptide is NADH-ubiquinone oxidoreductase chain 3 (ND3) (Solanum tuberosum (Potato)).